Here is a 156-residue protein sequence, read N- to C-terminus: NAD(P)H-quinone oxidoreductase subunit N (156 aa).

It belongs to the complex I NdhN subunit family. In terms of assembly, NDH-1 can be composed of about 15 different subunits; different subcomplexes with different compositions have been identified which probably have different functions.

It localises to the cellular thylakoid membrane. The catalysed reaction is a plastoquinone + NADH + (n+1) H(+)(in) = a plastoquinol + NAD(+) + n H(+)(out). It catalyses the reaction a plastoquinone + NADPH + (n+1) H(+)(in) = a plastoquinol + NADP(+) + n H(+)(out). Functionally, NDH-1 shuttles electrons from an unknown electron donor, via FMN and iron-sulfur (Fe-S) centers, to quinones in the respiratory and/or the photosynthetic chain. The immediate electron acceptor for the enzyme in this species is believed to be plastoquinone. Couples the redox reaction to proton translocation, and thus conserves the redox energy in a proton gradient. Cyanobacterial NDH-1 also plays a role in inorganic carbon-concentration. The chain is NAD(P)H-quinone oxidoreductase subunit N from Prochlorococcus marinus (strain MIT 9515).